We begin with the raw amino-acid sequence, 210 residues long: Regulatory protein RecX (210 aa).

Positions 28 to 47 are disordered; sequence SRRQEEGAASSLFDREAEEK.

It belongs to the RecX family.

It localises to the cytoplasm. Its function is as follows. Modulates RecA activity. This is Regulatory protein RecX from Corynebacterium efficiens (strain DSM 44549 / YS-314 / AJ 12310 / JCM 11189 / NBRC 100395).